The following is a 300-amino-acid chain: Cation-efflux pump FieF (300 aa).

4 consecutive transmembrane segments (helical) span residues 11-31 (LAAV…VFAW), 40-60 (LASL…LLVV), 81-101 (LAAL…ILTG), and 114-134 (PEVG…LVSF). The Zn(2+) site is built by aspartate 45 and aspartate 49. Residues histidine 153 and aspartate 157 each coordinate Zn(2+). Transmembrane regions (helical) follow at residues 156-176 (SDLL…KGIT) and 182-202 (FALG…YDAV).

This sequence belongs to the cation diffusion facilitator (CDF) transporter (TC 2.A.4) family. FieF subfamily. In terms of assembly, homodimer.

It is found in the cell inner membrane. The catalysed reaction is Zn(2+)(in) + H(+)(out) = Zn(2+)(out) + H(+)(in). It carries out the reaction Cd(2+)(in) + H(+)(out) = Cd(2+)(out) + H(+)(in). It catalyses the reaction Fe(2+)(in) + H(+)(out) = Fe(2+)(out) + H(+)(in). Functionally, divalent metal cation transporter which exports Zn(2+), Cd(2+) and possibly Fe(2+). May be involved in zinc and iron detoxification by efflux. The sequence is that of Cation-efflux pump FieF from Pectobacterium carotovorum subsp. carotovorum (strain PC1).